Here is a 65-residue protein sequence, read N- to C-terminus: Ferredoxin-like protein in vnf region (65 aa).

4Fe-4S ferredoxin-type domains are found at residues A2–G29 and G30–D65. C10, C13, C16, C20, C39, C42, C50, and C54 together coordinate [4Fe-4S] cluster.

Requires [4Fe-4S] cluster as cofactor.

The chain is Ferredoxin-like protein in vnf region from Azotobacter chroococcum mcd 1.